A 166-amino-acid polypeptide reads, in one-letter code: MSKVIETKQQVVTEIAEKLRASKSTIVVDYRGLTVSEATELRKNLREAGVEFKVYKNSLTRRAAESAEMAELNEFLTGPNAIAFSNEDVVAPAKVLNDFAKNHEALEIKAGVIEGKLVTLDEVKAIATLPSREGLLSMLLSVLQAPIRNLALATKAVADQKEEQGA.

The protein belongs to the universal ribosomal protein uL10 family. As to quaternary structure, part of the ribosomal stalk of the 50S ribosomal subunit. The N-terminus interacts with L11 and the large rRNA to form the base of the stalk. The C-terminus forms an elongated spine to which L12 dimers bind in a sequential fashion forming a multimeric L10(L12)X complex.

Forms part of the ribosomal stalk, playing a central role in the interaction of the ribosome with GTP-bound translation factors. This Bacillus mycoides (strain KBAB4) (Bacillus weihenstephanensis) protein is Large ribosomal subunit protein uL10.